A 241-amino-acid chain; its full sequence is Ion-translocating oxidoreductase complex subunit E (241 aa).

The next 6 helical transmembrane spans lie at 22–42, 69–89, 91–111, 124–144, 157–177, and 182–202; these read LLGLCPVLAITVNAINAIGLG, IPIYIIIISSVVSSIDLVIKA, AFNLYQSLGIFIPLIITNCIV, VLVSILDGLSIGLGSTLTMFL, LFFGIEHVLGESFRFLYIEVL, and VFLLFAFPSGAFMILGIVLAG.

Belongs to the NqrDE/RnfAE family. In terms of assembly, the complex is composed of six subunits: RnfA, RnfB, RnfC, RnfD, RnfE and RnfG.

Its subcellular location is the cell inner membrane. In terms of biological role, part of a membrane-bound complex that couples electron transfer with translocation of ions across the membrane. This chain is Ion-translocating oxidoreductase complex subunit E, found in Buchnera aphidicola subsp. Baizongia pistaciae (strain Bp).